Consider the following 115-residue polypeptide: Non-specific lipid-transfer protein 4.3 (115 aa).

A signal peptide spans 1-25 (MARAAATQLVLVAMVAAMLLVATDA). Intrachain disulfides connect cysteine 29–cysteine 77, cysteine 39–cysteine 54, cysteine 55–cysteine 97, and cysteine 75–cysteine 111.

The protein belongs to the plant LTP family.

Its function is as follows. Plant non-specific lipid-transfer proteins transfer phospholipids as well as galactolipids across membranes. May play a role in wax or cutin deposition in the cell walls of expanding epidermal cells and certain secretory tissues. This is Non-specific lipid-transfer protein 4.3 (LTP4.3) from Hordeum vulgare (Barley).